The chain runs to 354 residues: Rhodopsin (354 aa).

Residues M1–A36 are Extracellular-facing. N2 and N15 each carry an N-linked (GlcNAc...) asparagine glycan. The chain crosses the membrane as a helical span at residues F37 to V61. At T62–N73 the chain is on the cytoplasmic side. Residues Y74–Y96 form a helical membrane-spanning segment. Topologically, residues T97–C110 are extracellular. A disulfide bond links C110 and C187. A helical transmembrane segment spans residues N111–V133. The 'Ionic lock' involved in activated form stabilization signature appears at E134 to W136. Residues E134–H152 lie on the Cytoplasmic side of the membrane. Residues A153–F173 traverse the membrane as a helical segment. At G174–S202 the chain is on the extracellular side. The helical transmembrane segment at F203–G224 threads the bilayer. Topologically, residues R225–R252 are cytoplasmic. A helical membrane pass occupies residues M253–F274. At I275 to V286 the chain is on the extracellular side. The helical transmembrane segment at F287 to C308 threads the bilayer. K296 carries the post-translational modification N6-(retinylidene)lysine. Topologically, residues M309–A354 are cytoplasmic. Residues C322 and C323 are each lipidated (S-palmitoyl cysteine). Residues G333–A354 form a disordered region. Residues A334–A354 are compositionally biased toward low complexity.

Belongs to the G-protein coupled receptor 1 family. Opsin subfamily. Post-translationally, phosphorylated on some or all of the serine and threonine residues present in the C-terminal region. In terms of processing, contains one covalently linked retinal chromophore.

It localises to the membrane. Its subcellular location is the cell projection. The protein resides in the cilium. The protein localises to the photoreceptor outer segment. Its function is as follows. Photoreceptor required for image-forming vision at low light intensity. While most salt water fish species use retinal as chromophore, most freshwater fish use 3-dehydroretinal, or a mixture of retinal and 3-dehydroretinal. Light-induced isomerization of 11-cis to all-trans retinal triggers a conformational change that activates signaling via G-proteins. Subsequent receptor phosphorylation mediates displacement of the bound G-protein alpha subunit by arrestin and terminates signaling. The polypeptide is Rhodopsin (rho) (Zeus faber (John Dory)).